Here is a 370-residue protein sequence, read N- to C-terminus: MALLSAAPRALRLPRRLPLGAALPALRALATPAAAQKVPVSLIAALRKQHPVPLAQAREALERSGLDLAAALDYLRTSTSASAEKKAAKVSGRDTNEGLIAISLLGGKRVGMIHLACETDFVARNQVFLDTARGVAETTAFLDVPGDHEKPQIASSPYAFDPILDFPTESLLSAPLISLPAADTADGSLSPLPTSEPTTIKQSLLSSLAQTGENLKLLRAVSFAAPFPSTPDVRFVPGGYAHGGITDKEGKVGGIVVLSVTSADPEKPIASIIHGPGGDDLEKAAESLARTVARQVVGFPTKVIDRGDRAVDDEEVLMEQPFMMFNGDSRSVKDVLAEWGKERGVVLRVVGMRRWAVGDEIEIKEKETDA.

The transit peptide at 1-29 directs the protein to the mitochondrion; that stretch reads MALLSAAPRALRLPRRLPLGAALPALRAL.

Belongs to the EF-Ts family.

Its subcellular location is the mitochondrion. Functionally, associates with the EF-Tu.GDP complex and induces the exchange of GDP to GTP. It remains bound to the aminoacyl-tRNA.EF-Tu.GTP complex up to the GTP hydrolysis stage on the ribosome. The polypeptide is Elongation factor Ts, mitochondrial (Cryptococcus neoformans var. neoformans serotype D (strain B-3501A) (Filobasidiella neoformans)).